Here is a 232-residue protein sequence, read N- to C-terminus: Large ribosomal subunit protein uL1 (232 aa).

The protein belongs to the universal ribosomal protein uL1 family. As to quaternary structure, part of the 50S ribosomal subunit.

In terms of biological role, binds directly to 23S rRNA. The L1 stalk is quite mobile in the ribosome, and is involved in E site tRNA release. Its function is as follows. Protein L1 is also a translational repressor protein, it controls the translation of the L11 operon by binding to its mRNA. The sequence is that of Large ribosomal subunit protein uL1 from Francisella tularensis subsp. holarctica (strain LVS).